A 125-amino-acid chain; its full sequence is Small ribosomal subunit protein bS6 (125 aa).

Belongs to the bacterial ribosomal protein bS6 family.

Binds together with bS18 to 16S ribosomal RNA. This is Small ribosomal subunit protein bS6 from Baumannia cicadellinicola subsp. Homalodisca coagulata.